The following is a 1235-amino-acid chain: Chitin synthase 4 (1235 aa).

Over residues 1–11 (MSLPRRPGPSP) the composition is skewed to pro residues. The disordered stretch occupies residues 1-203 (MSLPRRPGPS…ASKGKREKSG (203 aa)). Residues 1 to 212 (MSLPRRPGPS…GGLPTPSFWN (212 aa)) are Cytoplasmic-facing. The span at 19 to 28 (YRQSGSRRSR) shows a compositional bias: basic residues. Polar residues predominate over residues 46-59 (PSQQQRVPSISSFP). The span at 94–107 (IRPERNRIGKDHPN) shows a compositional bias: basic and acidic residues. The span at 116–125 (NMNTLPSSTG) shows a compositional bias: polar residues. Residues 169 to 187 (ETEKSGDERRRRRKSDTTK) are compositionally biased toward basic and acidic residues. The span at 188 to 199 (HGKIVKASKGKR) shows a compositional bias: basic residues. A helical membrane pass occupies residues 213 to 233 (IYCGFVTFWCPGFVLKCFGMP). Residues 234–244 (EMAQQRAWREK) lie on the Extracellular side of the membrane. The helical transmembrane segment at 245–265 (MGLISIILLIMGFVGFITFGF) threads the bilayer. Residues 266–514 (TQVVCGKPPL…ASKVVLYVSL (249 aa)) are Cytoplasmic-facing. Residues 515-535 (VLILAVVLARFVLALIFQWFI) form a helical membrane-spanning segment. The Extracellular segment spans residues 536–1065 (SKTYAAAKTS…SMQFIVGIEL (530 aa)). The tract at residues 545-592 (SQTSDQRKRNRQIEDWTEDIYRAPPRLPGEVGSSVAGSSDRQSKRSSA) is disordered. Over residues 549–558 (DQRKRNRQIE) the composition is skewed to basic and acidic residues. N-linked (GlcNAc...) asparagine glycosylation occurs at Asn-639. The segment at 645 to 670 (FLKSDAYGSSSSPADGPGPAGFIHEA) is disordered. Residues 648 to 665 (SDAYGSSSSPADGPGPAG) are compositionally biased toward low complexity. Residue Asn-1034 is glycosylated (N-linked (GlcNAc...) asparagine). The chain crosses the membrane as a helical span at residues 1066 to 1086 (IGTLVLPAAIAFTFYVVIISI). The Cytoplasmic segment spans residues 1087–1092 (INSPPQ). Residues 1093 to 1113 (IIPLVLLGLILGLPAILVVVT) form a helical membrane-spanning segment. Residues 1114–1116 (AHS) lie on the Extracellular side of the membrane. A helical membrane pass occupies residues 1117 to 1137 (WSYIIWMFIYLLSLPVWNFVL). The Cytoplasmic portion of the chain corresponds to 1138–1235 (PTYAFWKFDD…RHFDDYFSDA (98 aa)). Residues 1201–1235 (RDNVISGVGGSNGWGSSQPRGHEQGRHFDDYFSDA) form a disordered region. Positions 1220–1235 (RGHEQGRHFDDYFSDA) are enriched in basic and acidic residues.

It belongs to the chitin synthase family. Class IV subfamily.

The protein localises to the cell membrane. The catalysed reaction is [(1-&gt;4)-N-acetyl-beta-D-glucosaminyl](n) + UDP-N-acetyl-alpha-D-glucosamine = [(1-&gt;4)-N-acetyl-beta-D-glucosaminyl](n+1) + UDP + H(+). In terms of biological role, polymerizes chitin, a structural polymer of the cell wall and septum, by transferring the sugar moiety of UDP-GlcNAc to the non-reducing end of the growing chitin polymer. This chain is Chitin synthase 4 (chs-4), found in Neurospora crassa (strain ATCC 24698 / 74-OR23-1A / CBS 708.71 / DSM 1257 / FGSC 987).